A 357-amino-acid polypeptide reads, in one-letter code: Sulfate/thiosulfate import ATP-binding protein CysA (357 aa).

Residues 3 to 237 (IQIQGVSKQY…PASPFVYDFL (235 aa)) enclose the ABC transporter domain. 35-42 (GPSGSGKT) lines the ATP pocket.

Belongs to the ABC transporter superfamily. Sulfate/tungstate importer (TC 3.A.1.6) family. In terms of assembly, the complex is composed of two ATP-binding proteins (CysA), two transmembrane proteins (CysT and CysW) and a solute-binding protein (CysP).

It localises to the cell membrane. The catalysed reaction is sulfate(out) + ATP + H2O = sulfate(in) + ADP + phosphate + H(+). The enzyme catalyses thiosulfate(out) + ATP + H2O = thiosulfate(in) + ADP + phosphate + H(+). Functionally, part of the ABC transporter complex CysAWTP involved in sulfate/thiosulfate import. Responsible for energy coupling to the transport system. The chain is Sulfate/thiosulfate import ATP-binding protein CysA from Bacillus cereus (strain ATCC 14579 / DSM 31 / CCUG 7414 / JCM 2152 / NBRC 15305 / NCIMB 9373 / NCTC 2599 / NRRL B-3711).